The sequence spans 118 residues: Fluoride-specific ion channel FluC 2 (118 aa).

4 helical membrane passes run M1–I21, F33–G53, G55–F75, and I93–M113. Na(+)-binding residues include G70 and T73.

The protein belongs to the fluoride channel Fluc/FEX (TC 1.A.43) family.

Its subcellular location is the cell membrane. The catalysed reaction is fluoride(in) = fluoride(out). Its activity is regulated as follows. Na(+) is not transported, but it plays an essential structural role and its presence is essential for fluoride channel function. In terms of biological role, fluoride-specific ion channel. Important for reducing fluoride concentration in the cell, thus reducing its toxicity. The sequence is that of Fluoride-specific ion channel FluC 2 from Bacillus cereus (strain ATCC 10987 / NRS 248).